The chain runs to 291 residues: Protease HtpX (291 aa).

2 consecutive transmembrane segments (helical) span residues 4–24 (IALF…VLNI) and 36–56 (LSGL…ISLM). His143 is a Zn(2+) binding site. Residue Glu144 is part of the active site. Residue His147 coordinates Zn(2+). Helical transmembrane passes span 151-171 (GDMI…IFLS) and 199-219 (FIVS…LTMW). Residue Glu225 coordinates Zn(2+).

The protein belongs to the peptidase M48B family. The cofactor is Zn(2+).

It localises to the cell inner membrane. The polypeptide is Protease HtpX (Aliivibrio fischeri (strain ATCC 700601 / ES114) (Vibrio fischeri)).